Here is a 212-residue protein sequence, read N- to C-terminus: GTP-binding nuclear protein Ran (212 aa).

One can recognise a Small GTPase Ran-type domain in the interval Glu-3–Asn-167. Residue Asp-14 to Thr-21 participates in GTP binding. Residues Pro-33 to Val-41 are switch-I. GTP-binding positions include Gly-64, Asn-118 to Asp-121, and Ser-146 to Lys-148. The segment at Gly-64–Asn-80 is switch-II.

Belongs to the small GTPase superfamily. Ran family. As to quaternary structure, found in a nuclear export complex with RanGTP, exportin and pre-miRNA.

It is found in the nucleus. Functionally, GTP-binding protein involved in nucleocytoplasmic transport. Required for the import of protein into the nucleus and also for RNA export. Involved in chromatin condensation and control of cell cycle. The chain is GTP-binding nuclear protein Ran (ranA) from Dictyostelium discoideum (Social amoeba).